The chain runs to 92 residues: MARSLEKGPFVAYHLLKKIENLNVEEEKKIIVTWSRASTIVPIMVGHTIAVHNGQEHLPIYVTDRMVGHKLGEFAPTRIFRGHAKNDKKSRR.

It belongs to the universal ribosomal protein uS19 family.

Its subcellular location is the plastid. The protein localises to the chloroplast. Functionally, protein S19 forms a complex with S13 that binds strongly to the 16S ribosomal RNA. The polypeptide is Small ribosomal subunit protein uS19c (Huperzia lucidula (Shining clubmoss)).